The primary structure comprises 23 residues: uncharacterized protein (23 aa).

The protein localises to the plastid. The protein resides in the chloroplast. This is an uncharacterized protein from Zea mays (Maize).